The primary structure comprises 440 residues: D-serine dehydratase (440 aa).

K116 is modified (N6-(pyridoxal phosphate)lysine).

It belongs to the serine/threonine dehydratase family. DsdA subfamily. As to quaternary structure, monomer. Pyridoxal 5'-phosphate serves as cofactor.

The catalysed reaction is D-serine = pyruvate + NH4(+). This chain is D-serine dehydratase, found in Salmonella dublin (strain CT_02021853).